The chain runs to 359 residues: Putative ankyrin repeat protein R190 (359 aa).

ANK repeat units lie at residues 72–103 (RLME…DFRC), 105–133 (DCVI…DLNR), 142–173 (DEII…SISI), 203–234 (LGNL…DINN), 236–260 (HEYS…YGLI), 261–287 (IHDD…IGHK), and 288–317 (PSKQ…DLSD).

The protein is Putative ankyrin repeat protein R190 of Acanthamoeba polyphaga (Amoeba).